The primary structure comprises 250 residues: tRNA pseudouridine synthase A (250 aa).

Aspartate 52 serves as the catalytic Nucleophile. Tyrosine 110 contributes to the substrate binding site.

Belongs to the tRNA pseudouridine synthase TruA family. In terms of assembly, homodimer.

It catalyses the reaction uridine(38/39/40) in tRNA = pseudouridine(38/39/40) in tRNA. In terms of biological role, formation of pseudouridine at positions 38, 39 and 40 in the anticodon stem and loop of transfer RNAs. In Citrifermentans bemidjiense (strain ATCC BAA-1014 / DSM 16622 / JCM 12645 / Bem) (Geobacter bemidjiensis), this protein is tRNA pseudouridine synthase A.